Consider the following 532-residue polypeptide: Alkaline phosphatase (532 aa).

The disordered stretch occupies residues 1-20 (MASERDPLLPVHGEGPESPS). The helical; Signal-anchor for type II membrane protein transmembrane segment at 27-47 (WIKHGILLILVLSTVIFFYFF) threads the bilayer. Asp68 contacts Mg(2+). Asp68 lines the Zn(2+) pocket. Ser115 acts as the Phosphoserine intermediate in catalysis. Residues Asp166, Thr168, and Glu306 each coordinate Mg(2+). 5 residues coordinate Zn(2+): Asp311, His315, Asp352, His353, and His456.

Belongs to the alkaline phosphatase family. The cofactor is Mg(2+). It depends on Zn(2+) as a cofactor.

It is found in the membrane. The enzyme catalyses a phosphate monoester + H2O = an alcohol + phosphate. The polypeptide is Alkaline phosphatase (Schizosaccharomyces pombe (strain 972 / ATCC 24843) (Fission yeast)).